Here is a 407-residue protein sequence, read N- to C-terminus: Zinc finger protein 552 (407 aa).

In terms of domain architecture, KRAB spans 14–90; the sequence is VTFEDVAVKF…PMAGVSPKKA (77 aa). The segment at 91–113 adopts a C2H2-type 1 zinc-finger fold; it reads HPCEMCGPILGDILHVADHQGTH. The C2H2-type 2; degenerate zinc finger occupies 119–141; the sequence is HRCEAWGNKLYDSGNFHQHQNEH. Glycyl lysine isopeptide (Lys-Gly) (interchain with G-Cter in SUMO2) cross-links involve residues K176 and K198. Residues 212–234 form a C2H2-type 3; degenerate zinc finger; that stretch reads YSCGGCMKHFSTKDILSQHERLL. A C2H2-type 4; degenerate zinc finger spans residues 244–262; the sequence is ECGKSSSKYDSFSNHQGVH. Residues K251 and K266 each participate in a glycyl lysine isopeptide (Lys-Gly) (interchain with G-Cter in SUMO2) cross-link. C2H2-type zinc fingers lie at residues 268-290, 296-318, 324-346, 352-374, and 380-402; these read YTCGICGKLFNSKSHLLVHQRIH, YECEVCQKFFRHKYHLIAHQRVH, YECSDCGKSFTHSSTFRVHKRVH, YECSECGKSFAESSSLTKHRRVH, and YGCSECEKKFRQISSLRHHQRVH. Residue K308 forms a Glycyl lysine isopeptide (Lys-Gly) (interchain with G-Cter in SUMO2) linkage.

Belongs to the krueppel C2H2-type zinc-finger protein family.

It is found in the nucleus. Functionally, may be involved in transcriptional regulation. The sequence is that of Zinc finger protein 552 (ZNF552) from Homo sapiens (Human).